Reading from the N-terminus, the 166-residue chain is UPF0260 protein GbCGDNIH1_2046 (166 aa).

Residues 147–166 are disordered; it reads RFPRPRRPRQEPAGKTADES. The span at 154-166 shows a compositional bias: basic and acidic residues; sequence PRQEPAGKTADES.

Belongs to the UPF0260 family.

This Granulibacter bethesdensis (strain ATCC BAA-1260 / CGDNIH1) protein is UPF0260 protein GbCGDNIH1_2046.